The primary structure comprises 705 residues: Polyribonucleotide nucleotidyltransferase (705 aa).

Residues D492 and D498 each coordinate Mg(2+). In terms of domain architecture, KH spans 559–618 (PLMITMKVSPDKIRHIIGPGGKIINKIIDETGVEIDIDDDGSVYILAQDQESGNRAKEII). In terms of domain architecture, S1 motif spans 628–696 (GDIYEGRVKK…ELGRINLSRK (69 aa)).

Belongs to the polyribonucleotide nucleotidyltransferase family. Mg(2+) is required as a cofactor.

Its subcellular location is the cytoplasm. It catalyses the reaction RNA(n+1) + phosphate = RNA(n) + a ribonucleoside 5'-diphosphate. Functionally, involved in mRNA degradation. Catalyzes the phosphorolysis of single-stranded polyribonucleotides processively in the 3'- to 5'-direction. This Halothermothrix orenii (strain H 168 / OCM 544 / DSM 9562) protein is Polyribonucleotide nucleotidyltransferase.